The chain runs to 300 residues: Ribonuclease HIII (300 aa).

An RNase H type-2 domain is found at 83–300; that stretch reads IPIIGSDEVG…THKAQALLTK (218 aa). The a divalent metal cation site is built by D89, E90, and D194.

It belongs to the RNase HII family. RnhC subfamily. Mn(2+) serves as cofactor. The cofactor is Mg(2+).

It localises to the cytoplasm. The catalysed reaction is Endonucleolytic cleavage to 5'-phosphomonoester.. Its function is as follows. Endonuclease that specifically degrades the RNA of RNA-DNA hybrids. The protein is Ribonuclease HIII of Streptococcus pyogenes serotype M5 (strain Manfredo).